The sequence spans 235 residues: 1-(5-phosphoribosyl)-5-[(5-phosphoribosylamino)methylideneamino] imidazole-4-carboxamide isomerase (235 aa).

Catalysis depends on aspartate 8, which acts as the Proton acceptor. The Proton donor role is filled by aspartate 128.

It belongs to the HisA/HisF family.

It localises to the cytoplasm. The catalysed reaction is 1-(5-phospho-beta-D-ribosyl)-5-[(5-phospho-beta-D-ribosylamino)methylideneamino]imidazole-4-carboxamide = 5-[(5-phospho-1-deoxy-D-ribulos-1-ylimino)methylamino]-1-(5-phospho-beta-D-ribosyl)imidazole-4-carboxamide. The protein operates within amino-acid biosynthesis; L-histidine biosynthesis; L-histidine from 5-phospho-alpha-D-ribose 1-diphosphate: step 4/9. This chain is 1-(5-phosphoribosyl)-5-[(5-phosphoribosylamino)methylideneamino] imidazole-4-carboxamide isomerase, found in Thermus thermophilus (strain ATCC BAA-163 / DSM 7039 / HB27).